The chain runs to 445 residues: UDP-N-acetylmuramoylalanine--D-glutamate ligase (445 aa).

Gly-117–Thr-123 is an ATP binding site.

Belongs to the MurCDEF family.

The protein resides in the cytoplasm. It catalyses the reaction UDP-N-acetyl-alpha-D-muramoyl-L-alanine + D-glutamate + ATP = UDP-N-acetyl-alpha-D-muramoyl-L-alanyl-D-glutamate + ADP + phosphate + H(+). It participates in cell wall biogenesis; peptidoglycan biosynthesis. Cell wall formation. Catalyzes the addition of glutamate to the nucleotide precursor UDP-N-acetylmuramoyl-L-alanine (UMA). This is UDP-N-acetylmuramoylalanine--D-glutamate ligase from Neisseria meningitidis serogroup A / serotype 4A (strain DSM 15465 / Z2491).